Here is a 472-residue protein sequence, read N- to C-terminus: Ribulose bisphosphate carboxylase large chain (472 aa).

Asn120 and Thr170 together coordinate substrate. The Proton acceptor role is filled by Lys172. Position 174 (Lys174) interacts with substrate. Positions 198, 200, and 201 each coordinate Mg(2+). An N6-carboxylysine modification is found at Lys198. The active-site Proton acceptor is His291. Substrate is bound by residues Arg292, His324, and Ser376.

It belongs to the RuBisCO large chain family. Type I subfamily. In terms of assembly, heterohexadecamer of 8 large chains and 8 small chains. Mg(2+) serves as cofactor.

It is found in the carboxysome. The enzyme catalyses 2 (2R)-3-phosphoglycerate + 2 H(+) = D-ribulose 1,5-bisphosphate + CO2 + H2O. The catalysed reaction is D-ribulose 1,5-bisphosphate + O2 = 2-phosphoglycolate + (2R)-3-phosphoglycerate + 2 H(+). Its function is as follows. RuBisCO catalyzes two reactions: the carboxylation of D-ribulose 1,5-bisphosphate, the primary event in carbon dioxide fixation, as well as the oxidative fragmentation of the pentose substrate in the photorespiration process. Both reactions occur simultaneously and in competition at the same active site. The protein is Ribulose bisphosphate carboxylase large chain of Gloeothece citriformis (strain PCC 7424) (Cyanothece sp. (strain PCC 7424)).